We begin with the raw amino-acid sequence, 368 residues long: Chaperone protein DnaJ (368 aa).

The J domain occupies 5–70; the sequence is DYYEVLGVSK…EKRSMYDRMG (66 aa). Residues 132–210 form a CR-type zinc finger; sequence GVKKTITFTA…CHGSGVADRQ (79 aa). Zn(2+) contacts are provided by Cys145, Cys148, Cys162, Cys165, Cys184, Cys187, Cys198, and Cys201. CXXCXGXG motif repeat units follow at residues 145-152, 162-169, 184-191, and 198-205; these read CEVCDGKG, CRTCHGTG, CGTCRGQG, and CQSCHGSG. Residues 349–368 form a disordered region; it reads DGDEHSSSPKKKSFFDRLFD. Over residues 350 to 368 the composition is skewed to basic and acidic residues; the sequence is GDEHSSSPKKKSFFDRLFD.

It belongs to the DnaJ family. In terms of assembly, homodimer. It depends on Zn(2+) as a cofactor.

Its subcellular location is the cytoplasm. In terms of biological role, participates actively in the response to hyperosmotic and heat shock by preventing the aggregation of stress-denatured proteins and by disaggregating proteins, also in an autonomous, DnaK-independent fashion. Unfolded proteins bind initially to DnaJ; upon interaction with the DnaJ-bound protein, DnaK hydrolyzes its bound ATP, resulting in the formation of a stable complex. GrpE releases ADP from DnaK; ATP binding to DnaK triggers the release of the substrate protein, thus completing the reaction cycle. Several rounds of ATP-dependent interactions between DnaJ, DnaK and GrpE are required for fully efficient folding. Also involved, together with DnaK and GrpE, in the DNA replication of plasmids through activation of initiation proteins. In Acinetobacter baylyi (strain ATCC 33305 / BD413 / ADP1), this protein is Chaperone protein DnaJ.